The chain runs to 1314 residues: E3 ubiquitin-protein ligase RNF123 (1314 aa).

The residue at position 2 (Ala2) is an N-acetylalanine. A B30.2/SPRY domain is found at 74–254 (VDSEDNESQG…VAFNFGSRPL (181 aa)). A disordered region spans residues 460–483 (HRSSRESRDGKEAREETTEERQRR). The span at 462-483 (SSRESRDGKEAREETTEERQRR) shows a compositional bias: basic and acidic residues. Ser675 bears the Phosphoserine mark. Arg683 is modified (asymmetric dimethylarginine). An interaction with NFKB1 region spans residues 968–974 (WILVRLW). Cys1254, Cys1257, Cys1269, His1271, Cys1274, Cys1277, Cys1288, and Cys1291 together coordinate Zn(2+). The RING-type zinc-finger motif lies at 1254–1292 (CPICYAHPISAVFQPCGHKSCKACINQHLMNNKDCFFCK).

Component of the KPC complex composed of RNF123/KPC1 and UBAC1/KPC2. Interacts with UBAC1 and CDKN1B via its N-terminal domain. Interacts with RIGI (via N-terminus) and IFIH1 (via N-terminus). Ubiquitinated, leading to its degradation. Deubiquitinated by USP19, thereby stimulating CDKN1B ubiquitin-dependent degradation.

It is found in the cytoplasm. The catalysed reaction is S-ubiquitinyl-[E2 ubiquitin-conjugating enzyme]-L-cysteine + [acceptor protein]-L-lysine = [E2 ubiquitin-conjugating enzyme]-L-cysteine + N(6)-ubiquitinyl-[acceptor protein]-L-lysine.. Its pathway is protein modification; protein ubiquitination. In terms of biological role, catalytic subunit of the KPC complex that acts as E3 ubiquitin-protein ligase. Promotes the ubiquitination and proteasome-mediated degradation of CDKN1B which is the cyclin-dependent kinase inhibitor at the G0-G1 transition of the cell cycle. Also acts as a key regulator of the NF-kappa-B signaling by promoting maturation of the NFKB1 component of NF-kappa-B: acts by catalyzing ubiquitination of the NFKB1 p105 precursor, leading to limited proteasomal degradation of NFKB1 p105 and generation of the active NFKB1 p50 subunit. Functions also as an inhibitor of innate antiviral signaling mediated by RIGI and IFIH1 independently of its E3 ligase activity. Interacts with the N-terminal CARD domains of RIGI and IFIH1 and competes with the downstream adapter MAVS. This chain is E3 ubiquitin-protein ligase RNF123 (Rnf123), found in Mus musculus (Mouse).